We begin with the raw amino-acid sequence, 491 residues long: MKTIVALGLLALATAASGQFLQDCTNALDGLYAIGNCESQFLTCSGGIARIMDCPADLIYNEPLLICDWRHNVVGCEGSGEASGEQSGEGSGEASGEGSGEASGEGSGEASGEGSGSGEGSGEENNVCEGLEDGAYSSGGCTTYYFFCTDNTARFLSCPTPLFYDVATQKCAWKALVEECNGEIIIDGSGETSGEGSGEASGENSGENSGEGSGEFEPTCDGKADGIYPNGVCVPNFLTCSGGIARVMNCPASLIFNPDILVCDWPRDVAECHGLSTPAPVCEDDGYFSFGQCSSSFTACTNGRAIVMFCPAGLKFSQANQRCDYDDLVNECQEASGEESSGEASGEQSGEGSGEASGEASGEASGENECVSLDNGLHAIGCSPRVLSCQNGHVDIFECPSSLVFNEQTLICDYPQTSLKCLIEDTLLIDETPITPFDCSTNGLFSDGLCSATYHQCSAGQLINFTCAETNAVFSAANAECVDSSTLLQCH.

The first 18 residues, 1 to 18 (MKTIVALGLLALATAASG), serve as a signal peptide directing secretion. The Chitin-binding type-2 1 domain maps to 21–78 (LQDCTNALDGLYAIGNCESQFLTCSGGIARIMDCPADLIYNEPLLICDWRHNVVGCEG). A disulfide bridge connects residues Cys-54 and Cys-67. Positions 80-126 (GEASGEQSGEGSGEASGEGSGEASGEGSGEASGEGSGSGEGSGEENN) are disordered. The segment covering 87-120 (SGEGSGEASGEGSGEASGEGSGEASGEGSGSGEG) has biased composition (gly residues). In terms of domain architecture, Chitin-binding type-2 2 spans 125-182 (NNVCEGLEDGAYSSGGCTTYYFFCTDNTARFLSCPTPLFYDVATQKCAWKALVEECNG). A disulfide bridge connects residues Cys-158 and Cys-171. Residues 187-217 (DGSGETSGEGSGEASGENSGENSGEGSGEFE) are disordered. Residues Ser-197 and Ser-201 are each glycosylated (O-linked (Xyl...) (chondroitin sulfate) serine). Low complexity predominate over residues 200–210 (ASGENSGENSG). 4 Chitin-binding type-2 domains span residues 217 to 274 (EPTC…ECHG), 279 to 334 (APVC…ECQE), 367 to 423 (ENEC…KCLI), and 436 to 491 (PFDC…LQCH). Disulfide bonds link Cys-250–Cys-263 and Cys-310–Cys-323. A disordered region spans residues 336-367 (SGEESSGEASGEQSGEGSGEASGEASGEASGE). Residues 356 to 367 (ASGEASGEASGE) are compositionally biased toward low complexity. Cys-399 and Cys-412 are joined by a disulfide. The N-linked (GlcNAc...) asparagine glycan is linked to Asn-464. Cys-467 and Cys-481 are disulfide-bonded.

Required for polar body extrusion during cytokinesis in embryo development. Affects cortical granule size. Shown to have roles in meiotic chromosome segregation, osmotic barrier function and polarization in conjunction with cpg-2. Binds chitin. The sequence is that of Chondroitin proteoglycan 2 from Caenorhabditis briggsae.